A 239-amino-acid chain; its full sequence is Sugar fermentation stimulation protein homolog (239 aa).

The protein belongs to the SfsA family.

The protein is Sugar fermentation stimulation protein homolog of Shewanella woodyi (strain ATCC 51908 / MS32).